The following is a 156-amino-acid chain: Small ribosomal subunit protein uS7 (156 aa).

This sequence belongs to the universal ribosomal protein uS7 family. As to quaternary structure, part of the 30S ribosomal subunit. Contacts proteins S9 and S11.

Its function is as follows. One of the primary rRNA binding proteins, it binds directly to 16S rRNA where it nucleates assembly of the head domain of the 30S subunit. Is located at the subunit interface close to the decoding center, probably blocks exit of the E-site tRNA. In Coprothermobacter proteolyticus (strain ATCC 35245 / DSM 5265 / OCM 4 / BT), this protein is Small ribosomal subunit protein uS7.